A 351-amino-acid polypeptide reads, in one-letter code: Translation initiation factor eIF2B subunit beta (351 aa).

This sequence belongs to the eIF-2B alpha/beta/delta subunits family. As to quaternary structure, component of the translation initiation factor 2B (eIF2B) complex which is a heterodecamer of two sets of five different subunits: alpha, beta, gamma, delta and epsilon. Subunits alpha, beta and delta comprise a regulatory subcomplex and subunits epsilon and gamma comprise a catalytic subcomplex. Within the complex, the hexameric regulatory complex resides at the center, with the two heterodimeric catalytic subcomplexes bound on opposite sides.

The protein resides in the cytoplasm. Its subcellular location is the cytosol. Its activity is regulated as follows. Activated by the chemical integrated stress response (ISR) inhibitor ISRIB which stimulates guanine nucleotide exchange factor activity for both phosphorylated and unphosphorylated eIF2. Its function is as follows. Acts as a component of the translation initiation factor 2B (eIF2B) complex, which catalyzes the exchange of GDP for GTP on eukaryotic initiation factor 2 (eIF2) gamma subunit. Its guanine nucleotide exchange factor activity is repressed when bound to eIF2 complex phosphorylated on the alpha subunit, thereby limiting the amount of methionyl-initiator methionine tRNA available to the ribosome and consequently global translation is repressed. This Homo sapiens (Human) protein is Translation initiation factor eIF2B subunit beta (EIF2B2).